We begin with the raw amino-acid sequence, 468 residues long: Cysteine--tRNA ligase (468 aa).

Cys-28 is a Zn(2+) binding site. A 'HIGH' region motif is present at residues 30-40 (PTVYNYIHIGN). Zn(2+) contacts are provided by Cys-212, His-237, and Glu-241. Residues 271–275 (KMSKS) carry the 'KMSKS' region motif. ATP is bound at residue Lys-274.

This sequence belongs to the class-I aminoacyl-tRNA synthetase family. In terms of assembly, monomer. Requires Zn(2+) as cofactor.

Its subcellular location is the cytoplasm. The catalysed reaction is tRNA(Cys) + L-cysteine + ATP = L-cysteinyl-tRNA(Cys) + AMP + diphosphate. In Lacticaseibacillus casei (strain BL23) (Lactobacillus casei), this protein is Cysteine--tRNA ligase.